The primary structure comprises 155 residues: Aspartate 1-decarboxylase (155 aa).

S24 acts as the Schiff-base intermediate with substrate; via pyruvic acid in catalysis. S24 carries the pyruvic acid (Ser) modification. T56 is a binding site for substrate. Residue Y57 is the Proton donor of the active site. Residue G72–A74 coordinates substrate.

It belongs to the PanD family. Heterooctamer of four alpha and four beta subunits. The cofactor is pyruvate. In terms of processing, is synthesized initially as an inactive proenzyme, which is activated by self-cleavage at a specific serine bond to produce a beta-subunit with a hydroxyl group at its C-terminus and an alpha-subunit with a pyruvoyl group at its N-terminus.

It is found in the cytoplasm. It carries out the reaction L-aspartate + H(+) = beta-alanine + CO2. It participates in cofactor biosynthesis; (R)-pantothenate biosynthesis; beta-alanine from L-aspartate: step 1/1. Catalyzes the pyruvoyl-dependent decarboxylation of aspartate to produce beta-alanine. The chain is Aspartate 1-decarboxylase from Methylocella silvestris (strain DSM 15510 / CIP 108128 / LMG 27833 / NCIMB 13906 / BL2).